Consider the following 435-residue polypeptide: 3-phosphoshikimate 1-carboxyvinyltransferase (435 aa).

The 3-phosphoshikimate site is built by lysine 28, serine 29, and arginine 33. Lysine 28 lines the phosphoenolpyruvate pocket. The phosphoenolpyruvate site is built by glycine 100 and arginine 128. Positions 173, 175, 321, and 348 each coordinate 3-phosphoshikimate. Glutamine 175 serves as a coordination point for phosphoenolpyruvate. Aspartate 321 serves as the catalytic Proton acceptor. Phosphoenolpyruvate-binding residues include arginine 352 and arginine 394.

The protein belongs to the EPSP synthase family. Monomer.

The protein localises to the cytoplasm. It carries out the reaction 3-phosphoshikimate + phosphoenolpyruvate = 5-O-(1-carboxyvinyl)-3-phosphoshikimate + phosphate. It participates in metabolic intermediate biosynthesis; chorismate biosynthesis; chorismate from D-erythrose 4-phosphate and phosphoenolpyruvate: step 6/7. Catalyzes the transfer of the enolpyruvyl moiety of phosphoenolpyruvate (PEP) to the 5-hydroxyl of shikimate-3-phosphate (S3P) to produce enolpyruvyl shikimate-3-phosphate and inorganic phosphate. The polypeptide is 3-phosphoshikimate 1-carboxyvinyltransferase (Desulfitobacterium hafniense (strain DSM 10664 / DCB-2)).